A 284-amino-acid polypeptide reads, in one-letter code: TM2 domain-containing protein almondex (284 aa).

A signal peptide spans 1-32 (MRLQRQCIVVNMRSAIVLIMIFVLTGIRNSET). Positions 33 to 63 (ASGGNQMDLSDSKGDHKDNSNASNGNGNAND) are disordered. Residues 33-225 (ASGGNQMDLS…NWTQGYRWST (193 aa)) are Extracellular-facing. The segment covering 42-51 (SDSKGDHKDN) has biased composition (basic and acidic residues). Low complexity predominate over residues 52-63 (SNASNGNGNAND). 6 N-linked (GlcNAc...) asparagine glycosylation sites follow: N53, N89, N141, N194, N206, and N216. Residues 220 to 267 (GYRWSTALLISLTLGGFGADRFYLGHWQEGIGKLFSFGGLGVWTIIDV) form the TM2 domain. Residues 226 to 246 (ALLISLTLGGFGADRFYLGHW) traverse the membrane as a helical segment. The Cytoplasmic segment spans residues 247-249 (QEG). Residues 250–270 (IGKLFSFGGLGVWTIIDVLLI) traverse the membrane as a helical segment. The Extracellular segment spans residues 271–284 (SMHYLGPADGSLYI).

Belongs to the TM2 family. In terms of tissue distribution, expressed in female ovary, mainly in nurse cells (at protein level). Expressed in the brain at low levels (at protein level).

The protein resides in the membrane. Its subcellular location is the vesicle. Its function is as follows. Positive regulator of Notch signaling during lateral inhibition and boundary formation. Interacts with Notch signaling at the membrane, at the level of gamma-secretase-mediated S3 cleavage. May regulate Notch signaling by regulating the subcellular localization of N/Notch in a context dependent manner. Maternal neurogenic factor involved in Notch signaling-dependent mesectodermal and neuroectodermal specification during early embryogenesis. Functions cooperatively with bisc/TM2D1 and amrt/TM2D2. Required for maintenance of neuronal function. Involved in imaginal specification of eyes and wings. In Drosophila melanogaster (Fruit fly), this protein is TM2 domain-containing protein almondex.